Here is a 266-residue protein sequence, read N- to C-terminus: Basic endochitinase C (266 aa).

The first 23 residues, 1–23, serve as a signal peptide directing secretion; sequence MRSLAVVVAVVATVAMAIGTAHG. Intrachain disulfides connect Cys46–Cys108, Cys120–Cys128, and Cys246–Cys259. Glu90 functions as the Proton donor in the catalytic mechanism.

It belongs to the glycosyl hydrolase 19 family. Chitinase class II subfamily. In terms of tissue distribution, localized to the starchy endoderm of the seed May localize to other parts of the seed including the aleurone cells (at protein level).

It carries out the reaction Random endo-hydrolysis of N-acetyl-beta-D-glucosaminide (1-&gt;4)-beta-linkages in chitin and chitodextrins.. In terms of biological role, defense against chitin-containing fungal pathogens. Binds the hyphal tips of fungi and degrades nascent chitin. The chain is Basic endochitinase C from Secale cereale (Rye).